The chain runs to 308 residues: Protoheme IX farnesyltransferase 2 (308 aa).

9 consecutive transmembrane segments (helical) span residues 20–40, 47–67, 92–114, 118–137, 144–164, 174–194, 218–238, 240–260, and 275–295; these read VTKPGIIMGNLIAVVGGFLLA, AVLMLATLVGLSLVVASGCAI, IPLKQVLGLGIALGVLGFGLLAW, LAALLFAAFGYLVYVGLYSL, VYGTLVGSLSGAVPPVVGYCA, LILLAMFSLWQMPHSYAIAIF, LHIVFYIALFALVSTLLPLAG, TGVGFMAVSCVTSFWWLLMAL, and QVFGFSILTIAILSLTMALDF.

This sequence belongs to the UbiA prenyltransferase family. Protoheme IX farnesyltransferase subfamily.

The protein localises to the cell inner membrane. The enzyme catalyses heme b + (2E,6E)-farnesyl diphosphate + H2O = Fe(II)-heme o + diphosphate. It functions in the pathway porphyrin-containing compound metabolism; heme O biosynthesis; heme O from protoheme: step 1/1. Its function is as follows. Converts heme B (protoheme IX) to heme O by substitution of the vinyl group on carbon 2 of heme B porphyrin ring with a hydroxyethyl farnesyl side group. In Shewanella loihica (strain ATCC BAA-1088 / PV-4), this protein is Protoheme IX farnesyltransferase 2.